A 104-amino-acid chain; its full sequence is Probable monothiol glutaredoxin 2 (104 aa).

Residues 7 to 104 form the Glutaredoxin domain; that stretch reads FEFIENEIKN…NGELEKMLKG (98 aa). Lys24 is a binding site for glutathione. Residue Cys32 coordinates [2Fe-2S] cluster. Glutathione-binding positions include Arg61, Phe73, and 86-87; that span reads CD.

It belongs to the glutaredoxin family. Monothiol subfamily.

The chain is Probable monothiol glutaredoxin 2 (grxC2) from Rickettsia felis (strain ATCC VR-1525 / URRWXCal2) (Rickettsia azadi).